Reading from the N-terminus, the 91-residue chain is Small ribosomal subunit protein uS15 (91 aa).

The protein belongs to the universal ribosomal protein uS15 family. As to quaternary structure, part of the 30S ribosomal subunit. Forms a bridge to the 50S subunit in the 70S ribosome, contacting the 23S rRNA.

In terms of biological role, one of the primary rRNA binding proteins, it binds directly to 16S rRNA where it helps nucleate assembly of the platform of the 30S subunit by binding and bridging several RNA helices of the 16S rRNA. Its function is as follows. Forms an intersubunit bridge (bridge B4) with the 23S rRNA of the 50S subunit in the ribosome. The protein is Small ribosomal subunit protein uS15 of Rickettsia canadensis (strain McKiel).